The following is a 268-amino-acid chain: Shikimate dehydrogenase (NADP(+)) (268 aa).

Residues 15–17 (SKS) and Thr-60 contribute to the shikimate site. Lys-64 serves as the catalytic Proton acceptor. The shikimate site is built by Asn-85 and Asp-101. NADP(+) is bound by residues 121 to 125 (GAGGS) and Leu-208. A shikimate-binding site is contributed by Tyr-210. Gly-230 is a binding site for NADP(+).

It belongs to the shikimate dehydrogenase family. As to quaternary structure, homodimer.

The catalysed reaction is shikimate + NADP(+) = 3-dehydroshikimate + NADPH + H(+). The protein operates within metabolic intermediate biosynthesis; chorismate biosynthesis; chorismate from D-erythrose 4-phosphate and phosphoenolpyruvate: step 4/7. Functionally, involved in the biosynthesis of the chorismate, which leads to the biosynthesis of aromatic amino acids. Catalyzes the reversible NADPH linked reduction of 3-dehydroshikimate (DHSA) to yield shikimate (SA). In Helicobacter hepaticus (strain ATCC 51449 / 3B1), this protein is Shikimate dehydrogenase (NADP(+)).